A 120-amino-acid polypeptide reads, in one-letter code: Protein crumbs homolog 3 (120 aa).

An N-terminal signal peptide occupies residues 1–26; sequence MANPGLGLLLALGLPFLLARWGRAWG. Residues 27-59 are Extracellular-facing; that stretch reads QIQTTSANENSTVLPSSTSSSSDGNLRPEAITA. A glycan (N-linked (GlcNAc...) asparagine) is linked at asparagine 36. The helical transmembrane segment at 60-80 threads the bilayer; sequence IIVVFSLLAALLLAVGLALLV. Residues 81–120 lie on the Cytoplasmic side of the membrane; sequence RKLREKRQTEGTYRPSSEEQVGARVPPTPNLKLPPEERLI. The tract at residues 84–120 is interaction with EPB41L5; it reads REKRQTEGTYRPSSEEQVGARVPPTPNLKLPPEERLI. Positions 87–120 are disordered; sequence RQTEGTYRPSSEEQVGARVPPTPNLKLPPEERLI. The span at 90-99 shows a compositional bias: polar residues; that stretch reads EGTYRPSSEE. Positions 117 to 120 match the PDZ-binding motif; sequence ERLI.

Component of a complex composed of CRB3, PALS1 and PATJ. Interacts (via C-terminus) with PALS1 (via PDZ domain). Interacts with PARD6A. Interacts (via intracellular domain) with EPB41L5. Interacts with WDR83. Preferentially expressed in epithelial tissues. Expressed at high levels in lung, kidney, and colon. Expressed at high levels in retina, colon and mammary glands. Moderately expressed in liver, spleen, pancreas and prostate. Moderately to weakly expressed in the placenta. Weakly expressed in skeletal muscle and small intestine.

The protein resides in the apical cell membrane. It localises to the cell junction. It is found in the tight junction. In terms of biological role, involved in the establishment of cell polarity in mammalian epithelial cells. Regulates the morphogenesis of tight junctions. Involved in promoting phosphorylation and cytoplasmic retention of transcriptional coactivators YAP1 and WWTR1/TAZ which leads to suppression of TGFB1-dependent transcription of target genes such as CCN2/CTGF, SERPINE1/PAI1, SNAI1/SNAIL1 and SMAD7. In Homo sapiens (Human), this protein is Protein crumbs homolog 3.